The sequence spans 353 residues: Protein RecA (353 aa).

67–74 (GPESSGKT) provides a ligand contact to ATP.

It belongs to the RecA family.

The protein localises to the cytoplasm. Its function is as follows. Can catalyze the hydrolysis of ATP in the presence of single-stranded DNA, the ATP-dependent uptake of single-stranded DNA by duplex DNA, and the ATP-dependent hybridization of homologous single-stranded DNAs. It interacts with LexA causing its activation and leading to its autocatalytic cleavage. The polypeptide is Protein RecA (Shewanella woodyi (strain ATCC 51908 / MS32)).